A 776-amino-acid chain; its full sequence is 3-isopropylmalate dehydratase (776 aa).

Positions 357, 418, and 421 each coordinate [4Fe-4S] cluster. A compositionally biased stretch (basic and acidic residues) spans 482–493 (SAPKVEVRHDTD). Disordered stretches follow at residues 482–518 (SAPK…SDVA) and 525–544 (DIPV…SADA). The segment covering 527–538 (PVSNSSTQSPGS) has biased composition (polar residues).

This sequence belongs to the aconitase/IPM isomerase family. As to quaternary structure, monomer. It depends on [4Fe-4S] cluster as a cofactor.

It carries out the reaction (2R,3S)-3-isopropylmalate = (2S)-2-isopropylmalate. The protein operates within amino-acid biosynthesis; L-leucine biosynthesis; L-leucine from 3-methyl-2-oxobutanoate: step 2/4. Catalyzes the isomerization between 2-isopropylmalate and 3-isopropylmalate, via the formation of 2-isopropylmaleate. The sequence is that of 3-isopropylmalate dehydratase (LEU1) from Eremothecium gossypii (strain ATCC 10895 / CBS 109.51 / FGSC 9923 / NRRL Y-1056) (Yeast).